Consider the following 187-residue polypeptide: Superoxide dismutase [Cu-Zn] (187 aa).

The first 21 residues, 1 to 21, serve as a signal peptide directing secretion; it reads MSLLPTGTLILLVLFILVLIT. Residues His76, His78, and His93 each contribute to the Cu cation site. Cysteines 87 and 176 form a disulfide. 4 residues coordinate Zn(2+): His93, His101, His110, and Asp113. Residue His150 coordinates Cu cation.

Belongs to the Cu-Zn superoxide dismutase family. Requires Cu cation as cofactor. The cofactor is Zn(2+).

It catalyses the reaction 2 superoxide + 2 H(+) = H2O2 + O2. In terms of biological role, destroys radicals which are normally produced within the cells and which are toxic to biological systems. The polypeptide is Superoxide dismutase [Cu-Zn] (Chlorella (PBCV-1)).